We begin with the raw amino-acid sequence, 452 residues long: MELKDKKILVVGLAKTGVAVTRFLAQAGAFVTVTDMREEEALSDVLAELSDLDITYELGRHVPYSFLMADLIVVSPGVPMDIKPLEMARSQKRRVVSEVELASWFIKAPMVAITGTNGKTTTTTLTGEIFKACGFETFVGGNIGNPLIELAESGQEVSRVVVELSSFQLEGVESFRPDVAVLLNITEDHLDRYHSFQEYIDAKLRIFENQTADDFAVLNIDDPLVAACASKLKAQLFPMSRLHELEEGISYRDGFITFSHKGKVLRFGTEGFKLKGVHNLDNIMASLASTLLMRCDGDCAYEAVKNFKGLPHRMELVEEIDGVAYYEDSKGTNVGSVVKSLESFDSGITLIAGGKDKGGSYEPLAPLVESRVSHLVLIGEAKARMNEALGSLTDTHLAETLEEAVEISRRLTKPGGVVLFSPACSSFDMFKNYEERAQRFKAAVRAGKKGEA.

115 to 121 (GTNGKTT) lines the ATP pocket.

Belongs to the MurCDEF family.

It is found in the cytoplasm. It carries out the reaction UDP-N-acetyl-alpha-D-muramoyl-L-alanine + D-glutamate + ATP = UDP-N-acetyl-alpha-D-muramoyl-L-alanyl-D-glutamate + ADP + phosphate + H(+). The protein operates within cell wall biogenesis; peptidoglycan biosynthesis. Its function is as follows. Cell wall formation. Catalyzes the addition of glutamate to the nucleotide precursor UDP-N-acetylmuramoyl-L-alanine (UMA). This Citrifermentans bemidjiense (strain ATCC BAA-1014 / DSM 16622 / JCM 12645 / Bem) (Geobacter bemidjiensis) protein is UDP-N-acetylmuramoylalanine--D-glutamate ligase.